The primary structure comprises 498 residues: Cytochrome P450 71B24 (498 aa).

The chain crosses the membrane as a helical span at residues 1–21 (MSILLYFIALLSLIIIKKIKD). C442 contacts heme.

The protein belongs to the cytochrome P450 family. Requires heme as cofactor.

It is found in the membrane. This Arabidopsis thaliana (Mouse-ear cress) protein is Cytochrome P450 71B24 (CYP71B24).